A 196-amino-acid polypeptide reads, in one-letter code: ATP-dependent Clp protease proteolytic subunit (196 aa).

S96 acts as the Nucleophile in catalysis. The active site involves H121.

This sequence belongs to the peptidase S14 family. In terms of assembly, fourteen ClpP subunits assemble into 2 heptameric rings which stack back to back to give a disk-like structure with a central cavity, resembling the structure of eukaryotic proteasomes.

The protein localises to the cytoplasm. It carries out the reaction Hydrolysis of proteins to small peptides in the presence of ATP and magnesium. alpha-casein is the usual test substrate. In the absence of ATP, only oligopeptides shorter than five residues are hydrolyzed (such as succinyl-Leu-Tyr-|-NHMec, and Leu-Tyr-Leu-|-Tyr-Trp, in which cleavage of the -Tyr-|-Leu- and -Tyr-|-Trp bonds also occurs).. Cleaves peptides in various proteins in a process that requires ATP hydrolysis. Has a chymotrypsin-like activity. Plays a major role in the degradation of misfolded proteins. This chain is ATP-dependent Clp protease proteolytic subunit, found in Streptococcus sanguinis (strain SK36).